The sequence spans 255 residues: tRNA (guanine-N(7)-)-methyltransferase (255 aa).

Positions 1–29 (MSDSDASRPSAIASDGPDAAGKHASGAPW) are disordered. Residues Glu86, Glu111, Asp138, and Asp160 each coordinate S-adenosyl-L-methionine. Asp160 is an active-site residue. Residues Lys164, Asp196, and 233–236 (TRYE) contribute to the substrate site.

Belongs to the class I-like SAM-binding methyltransferase superfamily. TrmB family.

It carries out the reaction guanosine(46) in tRNA + S-adenosyl-L-methionine = N(7)-methylguanosine(46) in tRNA + S-adenosyl-L-homocysteine. The protein operates within tRNA modification; N(7)-methylguanine-tRNA biosynthesis. In terms of biological role, catalyzes the formation of N(7)-methylguanine at position 46 (m7G46) in tRNA. The protein is tRNA (guanine-N(7)-)-methyltransferase of Ruegeria sp. (strain TM1040) (Silicibacter sp.).